The chain runs to 313 residues: Alpha-S1-casein (313 aa).

An N-terminal signal peptide occupies residues Met-1 to Ala-15. Positions Ala-77–Ser-96 are enriched in low complexity. A disordered region spans residues Ala-77–Asn-111. Phosphoserine is present on residues Ser-90, Ser-91, Ser-93, Ser-94, Ser-95, and Ser-96. Repeat copies occupy residues Leu-135–Ser-140, Leu-141–Ser-146, Leu-147–Ser-152, Leu-153–Ser-158, Leu-159–Ser-164, Leu-165–Ser-170, Leu-171–Ser-176, Met-177–Ser-182, Leu-183–Leu-188, Leu-189–Ser-194, Leu-195–Ser-200, Pro-201–Ser-206, Leu-207–Phe-212, Leu-213–Ser-218, and Leu-219–His-224. The interval Leu-135–His-224 is 15 X 6 AA tandem repeats.

The protein belongs to the alpha-casein family. As to expression, mammary gland specific. Secreted in milk.

The protein resides in the secreted. Important role in the capacity of milk to transport calcium phosphate. In Mus musculus (Mouse), this protein is Alpha-S1-casein (Csn1s1).